The primary structure comprises 556 residues: TNF receptor-associated factor 6-A (556 aa).

An RING-type; degenerate zinc finger spans residues 72-111 (CPICLMALREAVQTPCGHRFCKACILKSLRNAGHKCPVDN). 2 consecutive TRAF-type zinc fingers follow at residues 148–204 (RHLE…EDKS) and 205–261 (GHEL…HNLA). Residues 384 to 533 (NGVFIWRIKG…NDTLLVRCSV (150 aa)) enclose the MATH domain.

It belongs to the TNF receptor-associated factor family. A subfamily. In terms of assembly, homotrimer. Homooligomer. Interacts with tifa. In terms of tissue distribution, highly expressed in ovary and moderately expressed in kidney, spleen, stomach, colon and testis.

Its subcellular location is the cytoplasm. The protein localises to the cell cortex. It localises to the nucleus. It is found in the lipid droplet. The enzyme catalyses S-ubiquitinyl-[E2 ubiquitin-conjugating enzyme]-L-cysteine + [acceptor protein]-L-lysine = [E2 ubiquitin-conjugating enzyme]-L-cysteine + N(6)-ubiquitinyl-[acceptor protein]-L-lysine.. It functions in the pathway protein modification; protein ubiquitination. E3 ubiquitin ligase that, together with UBE2N and UBE2V1, mediates the synthesis of 'Lys-63'-linked-polyubiquitin chains conjugated to proteins, such as IKBKG, IRAK1, AKT1 and AKT2. Also mediates ubiquitination of free/unanchored polyubiquitin chain that leads to MAP3K7 activation. The protein is TNF receptor-associated factor 6-A (traf6-a) of Xenopus laevis (African clawed frog).